A 249-amino-acid chain; its full sequence is ATP synthase subunit a, chloroplastic (249 aa).

The next 5 helical transmembrane spans lie at Gln40 to Ile60, Val97 to Leu117, Ile136 to Ser156, Leu201 to Leu221, and Gly222 to Gly242.

This sequence belongs to the ATPase A chain family. In terms of assembly, F-type ATPases have 2 components, CF(1) - the catalytic core - and CF(0) - the membrane proton channel. CF(1) has five subunits: alpha(3), beta(3), gamma(1), delta(1), epsilon(1). CF(0) has four main subunits: a, b, b' and c.

The protein resides in the plastid. It is found in the chloroplast thylakoid membrane. In terms of biological role, key component of the proton channel; it plays a direct role in the translocation of protons across the membrane. This is ATP synthase subunit a, chloroplastic from Capsella bursa-pastoris (Shepherd's purse).